A 673-amino-acid chain; its full sequence is Vasorin (673 aa).

The first 24 residues, methionine 1–glycine 24, serve as a signal peptide directing secretion. Residues cysteine 25–proline 53 enclose the LRRNT domain. Residues cysteine 25–proline 576 lie on the Extracellular side of the membrane. 10 LRR repeats span residues aspartate 54 to glycine 75, glycine 78 to proline 99, asparagine 102 to glycine 123, arginine 126 to alanine 147, arginine 150 to proline 170, arginine 171 to threonine 192, asparagine 194 to arginine 215, asparagine 218 to leucine 239, glycine 241 to threonine 265, and alanine 266 to phenylalanine 288. N-linked (GlcNAc...) asparagine glycosylation is found at asparagine 102 and asparagine 118. The N-linked (GlcNAc...) asparagine glycan is linked to asparagine 274. One can recognise an LRRCT domain in the interval asparagine 299–valine 352. A disordered region spans residues proline 369–glutamine 389. Positions threonine 370 to glutamine 389 are enriched in polar residues. Positions glutamine 406–glutamate 443 constitute an EGF-like domain. Cystine bridges form between cysteine 410–cysteine 421, cysteine 415–cysteine 431, and cysteine 433–cysteine 442. In terms of domain architecture, Fibronectin type-III spans proline 463–alanine 559. 3 N-linked (GlcNAc...) asparagine glycosylation sites follow: asparagine 501, asparagine 529, and asparagine 555. The helical transmembrane segment at leucine 577–alanine 597 threads the bilayer. Topologically, residues tyrosine 598 to isoleucine 673 are cytoplasmic. The tract at residues threonine 608–glycine 648 is disordered.

In terms of assembly, interacts with TGFB1, TGFB2 and TGFB3. In terms of processing, N-glycosylated.

The protein resides in the membrane. May act as an inhibitor of TGF-beta signaling. The polypeptide is Vasorin (Vasn) (Mus musculus (Mouse)).